A 122-amino-acid chain; its full sequence is Small ribosomal subunit protein uS13 (122 aa).

The tract at residues 95-122 (GLPVRGQRTKTNARTRKGPKKTIAGKKK) is disordered.

Belongs to the universal ribosomal protein uS13 family. As to quaternary structure, part of the 30S ribosomal subunit. Forms a loose heterodimer with protein S19. Forms two bridges to the 50S subunit in the 70S ribosome.

Its function is as follows. Located at the top of the head of the 30S subunit, it contacts several helices of the 16S rRNA. In the 70S ribosome it contacts the 23S rRNA (bridge B1a) and protein L5 of the 50S subunit (bridge B1b), connecting the 2 subunits; these bridges are implicated in subunit movement. Contacts the tRNAs in the A and P-sites. This chain is Small ribosomal subunit protein uS13, found in Corynebacterium aurimucosum (strain ATCC 700975 / DSM 44827 / CIP 107346 / CN-1) (Corynebacterium nigricans).